Here is a 100-residue protein sequence, read N- to C-terminus: NADH-quinone oxidoreductase subunit K (100 aa).

A run of 3 helical transmembrane segments spans residues 4–24 (LSNYLIVSAVLFSIGTIGVLT), 29–49 (IVVFMCIELMLNAVNLTFVAF), and 60–80 (IFVFFIMTVAAAEAAVGLALF).

This sequence belongs to the complex I subunit 4L family. As to quaternary structure, NDH-1 is composed of 14 different subunits. Subunits NuoA, H, J, K, L, M, N constitute the membrane sector of the complex.

The protein localises to the cell inner membrane. The enzyme catalyses a quinone + NADH + 5 H(+)(in) = a quinol + NAD(+) + 4 H(+)(out). In terms of biological role, NDH-1 shuttles electrons from NADH, via FMN and iron-sulfur (Fe-S) centers, to quinones in the respiratory chain. The immediate electron acceptor for the enzyme in this species is believed to be ubiquinone. Couples the redox reaction to proton translocation (for every two electrons transferred, four hydrogen ions are translocated across the cytoplasmic membrane), and thus conserves the redox energy in a proton gradient. This is NADH-quinone oxidoreductase subunit K from Trichlorobacter lovleyi (strain ATCC BAA-1151 / DSM 17278 / SZ) (Geobacter lovleyi).